The chain runs to 6857 residues: Replicase polyprotein 1ab (6857 aa).

Residues 1679 to 1860 (FEQYYEFKIG…QYNQAFAVIK (182 aa)) form the Macro domain. Residues 2158–2191 (QVGQGGQQDGQVDQQIKESEQVVEPSAPSGQESP) form a disordered region. 10 consecutive transmembrane segments (helical) span residues 2303 to 2323 (LTYN…FGVL), 2330 to 2350 (TPFY…LMIW), 2385 to 2405 (LVQW…DYVV), 2535 to 2555 (LFYS…YVLF), 2639 to 2659 (VTVS…VVVL), 2664 to 2684 (FIWF…IILF), 2889 to 2909 (TTLV…LMVG), 3057 to 3077 (IISP…FLIL), 3106 to 3126 (VLFV…LALW), and 3142 to 3162 (LFIL…GFVF). Positions 2303–2683 (LTYNIKFKLI…VMMPVFVIIL (381 aa)) are HD1. An HD2 region spans residues 2889–3162 (TTLVIVMGVL…FLFMVGGFVF (274 aa)). Active-site charge relay system; for 3C-like serine proteinase activity residues include His3304, Glu3347, and Ser3416. An HD3 region spans residues 3555–3738 (HLHFIFSIYF…IVIVLSFRVF (184 aa)). The next 7 membrane-spanning stretches (helical) occupy residues 3556–3575 (LHFI…YWWL), 3580–3602 (SVVL…NVLF), 3611–3631 (LAVT…LGFL), 3640–3660 (SLII…VVNV), 3663–3683 (AIFV…LGIV), 3698–3718 (AVFT…LLLF), and 3723–3738 (LMSF…FRVF). The 232-residue stretch at 4566 to 4797 (DFKLLRGAWS…ANEMEIPTDY (232 aa)) folds into the NiRAN domain. In terms of domain architecture, RdRp catalytic spans 5105–5256 (FDVFGSDYTK…FSKPEALKIF (152 aa)). One can recognise a CV ZBD domain in the interval 5413 to 5528 (FDKVCFCCPN…NGVAQLLTSV (116 aa)). The Zn(2+) site is built by Cys5417, Cys5420, Cys5428, Cys5431, Cys5438, Cys5441, His5445, His5451, Cys5460, Cys5462, Cys5483, and Cys5486. One can recognise a (+)RNA virus helicase ATP-binding domain in the interval 5633 to 5812 (NQPWRLATCF…LQLATQKRYL (180 aa)). Positions 5813–5972 (TACYRCPPQI…FGMEKQSDFN (160 aa)) constitute a (+)RNA virus helicase C-terminal domain. Residues 5970–6183 (DFNIIPEVSS…YLASYEAAFK (214 aa)) enclose the ExoN domain. Active-site residues include Asp5984, Glu5986, and Asp6085. Zn(2+)-binding residues include His6149, Cys6153, and His6157. Active-site residues include His6161 and Asp6166. Cys6172 provides a ligand contact to Zn(2+). In terms of domain architecture, NendoU spans 6451–6591 (LPDTLFSTGR…GEDDIQTFYP (141 aa)). Active-site residues include His6487, His6504, Lys6536, Lys6633, Asp6709, Lys6737, and Glu6771. The Nidovirus-type SAM-dependent 2'-O-MTase domain maps to 6593–6857 (KDFVRSYYEW…EVPMLCQMEH (265 aa)).

Post-translationally, specific enzymatic cleavages in vivo by its own protease yield mature proteins. 3CL-PRO is autocatalytically processed.

Its subcellular location is the host membrane. The enzyme catalyses RNA(n) + a ribonucleoside 5'-triphosphate = RNA(n+1) + diphosphate. The catalysed reaction is ATP + H2O = ADP + phosphate + H(+). In terms of biological role, the 3C-like serine proteinase is responsible for the majority of cleavages. Its function is as follows. The helicase which contains a zinc finger structure displays RNA and DNA duplex-unwinding activities with 5' to 3' polarity. Functionally, acts on both ssRNA and dsRNA in a 3' to 5' direction. NendoU is a Mn(2+)-dependent, uridylate-specific enzyme, which leaves 2'-3'-cyclic phosphates 5' to the cleaved bond. The polypeptide is Replicase polyprotein 1ab (rep) (Equus caballus (Horse)).